We begin with the raw amino-acid sequence, 231 residues long: Uracil-DNA glycosylase (231 aa).

Aspartate 74 functions as the Proton acceptor in the catalytic mechanism.

The protein belongs to the uracil-DNA glycosylase (UDG) superfamily. UNG family.

The protein resides in the cytoplasm. It carries out the reaction Hydrolyzes single-stranded DNA or mismatched double-stranded DNA and polynucleotides, releasing free uracil.. Its function is as follows. Excises uracil residues from the DNA which can arise as a result of misincorporation of dUMP residues by DNA polymerase or due to deamination of cytosine. This Campylobacter jejuni subsp. jejuni serotype O:6 (strain 81116 / NCTC 11828) protein is Uracil-DNA glycosylase.